The sequence spans 93 residues: UPF0223 protein gbs1030 (93 aa).

It belongs to the UPF0223 family.

The chain is UPF0223 protein gbs1030 from Streptococcus agalactiae serotype III (strain NEM316).